A 146-amino-acid polypeptide reads, in one-letter code: Ribonuclease H (146 aa).

In terms of domain architecture, RNase H type-1 spans 1-141; that stretch reads MEKIDIFTDG…ADALANRGVE (141 aa). Mg(2+) contacts are provided by aspartate 9, glutamate 47, aspartate 69, and aspartate 133.

The protein belongs to the RNase H family. Monomer. Mg(2+) serves as cofactor.

The protein localises to the cytoplasm. It carries out the reaction Endonucleolytic cleavage to 5'-phosphomonoester.. Its function is as follows. Endonuclease that specifically degrades the RNA of RNA-DNA hybrids. This chain is Ribonuclease H, found in Herminiimonas arsenicoxydans.